A 467-amino-acid polypeptide reads, in one-letter code: Regulatory protein NPR6 (467 aa).

The BTB domain maps to 27 to 111; sequence SDVTFSVEGR…LYSGQVSIVP (85 aa). The C2HC NPR-type zinc-finger motif lies at 117-131; it reads RSNCGDRGCWHTHCT. Residues C120, C125, H127, and C130 each coordinate Zn(2+). 4 ANK repeats span residues 247 to 276, 277 to 306, 311 to 340, and 344 to 378; these read QKIR…LNLD, ESLA…DVNY, TGKT…DPNV, and DGIT…KLRL. The interval 434–467 is disordered; sequence RDIGDDNSNQREGMNLHHHHHDPSTMYHHHHHHF. Residues 449-467 show a composition bias toward basic residues; the sequence is LHHHHHDPSTMYHHHHHHF.

Belongs to the plant 'ANKYRIN-BTB/POZ' family. 'NOOT-BOP-COCH-like' (NBCL) subfamily. Homodimer or heterodimer with BOP2. Interacts with PAN.

It localises to the cytoplasm. Its subcellular location is the nucleus. Its pathway is protein modification; protein ubiquitination. Its function is as follows. May act as a substrate-specific adapter of an E3 ubiquitin-protein ligase complex (CUL3-RBX1-BTB) which mediates the ubiquitination and subsequent proteasomal degradation of target proteins. Acts redundantly with BOP2. BOP1/2 promote leaf and floral meristem fate and determinacy in a pathway targeting AP1 and AGL24. BOP1/2 act as transcriptional co-regulators through direct interaction with TGA factors, including PAN, a direct regulator of AP1. Controls lateral organ fate through positive regulation of adaxial-abaxial polarity genes ATHB-14/PHB, YAB1/FIL and YAB3, and through positive regulation of LOB domain-containing genes LOB, LBD6/AS2 and LBD36. Promotes and maintains a developmentally determinate state in leaf cells through the negative regulation of JAG, JGL and class I KNOX genes. Is also involved in nectary development, formation of normal abscission zones (AZs) and suppression of bract formation, probably by regulating the cell wall disorganization. The protein is Regulatory protein NPR6 of Arabidopsis thaliana (Mouse-ear cress).